A 97-amino-acid chain; its full sequence is Aspartyl/glutamyl-tRNA(Asn/Gln) amidotransferase subunit C (97 aa).

It belongs to the GatC family. As to quaternary structure, heterotrimer of A, B and C subunits.

The enzyme catalyses L-glutamyl-tRNA(Gln) + L-glutamine + ATP + H2O = L-glutaminyl-tRNA(Gln) + L-glutamate + ADP + phosphate + H(+). It catalyses the reaction L-aspartyl-tRNA(Asn) + L-glutamine + ATP + H2O = L-asparaginyl-tRNA(Asn) + L-glutamate + ADP + phosphate + 2 H(+). Functionally, allows the formation of correctly charged Asn-tRNA(Asn) or Gln-tRNA(Gln) through the transamidation of misacylated Asp-tRNA(Asn) or Glu-tRNA(Gln) in organisms which lack either or both of asparaginyl-tRNA or glutaminyl-tRNA synthetases. The reaction takes place in the presence of glutamine and ATP through an activated phospho-Asp-tRNA(Asn) or phospho-Glu-tRNA(Gln). This chain is Aspartyl/glutamyl-tRNA(Asn/Gln) amidotransferase subunit C, found in Synechococcus sp. (strain JA-2-3B'a(2-13)) (Cyanobacteria bacterium Yellowstone B-Prime).